Reading from the N-terminus, the 365-residue chain is Class I histocompatibility antigen, Gogo-C*0101/C*0102 alpha chain (365 aa).

A signal peptide spans Met-1–Ala-24. Residues Gly-25–Asp-114 are alpha-1. Residues Gly-25–Ile-308 lie on the Extracellular side of the membrane. N-linked (GlcNAc...) asparagine glycosylation occurs at Asn-110. An alpha-2 region spans residues Gly-115 to Ala-206. Intrachain disulfides connect Cys-125-Cys-188 and Cys-227-Cys-283. Positions Asp-207–Trp-298 are alpha-3. An Ig-like C1-type domain is found at Pro-209 to Arg-297. A connecting peptide region spans residues Glu-299–Ile-308. The helical transmembrane segment at Val-309–Cys-332 threads the bilayer. Residues Arg-333–Ala-365 lie on the Cytoplasmic side of the membrane. A phosphoserine mark is found at Ser-356 and Ser-359.

This sequence belongs to the MHC class I family. Heterodimer of an alpha chain and a beta chain (beta-2-microglobulin).

It is found in the membrane. Its function is as follows. Involved in the presentation of foreign antigens to the immune system. The sequence is that of Class I histocompatibility antigen, Gogo-C*0101/C*0102 alpha chain from Gorilla gorilla gorilla (Western lowland gorilla).